The primary structure comprises 631 residues: ATP-dependent DNA helicase 2 subunit 1 (631 aa).

The Ku domain maps to 262-487 (FYLGPNLSMS…VEFFQKIIKK (226 aa)). Positions 550–570 (AEPHKKRAAKSTTAGASGPKM) are disordered.

The protein belongs to the ku70 family. Heterodimer of a 70 kDa and a 80 kDa subunit.

It is found in the nucleus. Its subcellular location is the chromosome. It catalyses the reaction ATP + H2O = ADP + phosphate + H(+). In terms of biological role, single-stranded DNA-dependent ATP-dependent helicase. Involved in non-homologous end joining (NHEJ) DNA double strand break repair. Sequence-specific DNA-binding protein that has a high affinity for a 31 bp sequence in the Yp1 gene. Site-specific DNA binding to 31 bp P element inverted repeats. The polypeptide is ATP-dependent DNA helicase 2 subunit 1 (Irbp) (Drosophila melanogaster (Fruit fly)).